The sequence spans 737 residues: MGFKGKYPQMVRETGFKLRQYRDGPLDWRLMGSYETERILREQNFELVDKALTHLSEAPLGTVLETHILDSGIAKYFVMSQYAIQYLMCCRTYLDECVTDLKEAHTTAQEEIATLRKSLSESNNEVVQLHKRITQIEAIREVVYPCHLCTKNFISNEALNVHIGRKHRVASPPSLTSATGKEKDRDKATDVHLINTIKMELEIKQLKERLNAAERNIKERSTGSKRVSPRQEQRHVGIQSNLAEPKEKDEDSGEARQSEASERKEQLTGLAERLSNFEEWQTQLKQSNEQFIQDINKRLEGLSHALEQSKQASASTPPLEDRVATPCLEDLERILTEKVAEIGKVSAHRLEEVVYHLEEGYKEKLGALERELKQLSVQKVQPEPVQTVPVASKIPKPVVRKEETNIDRIRKQVESEFLKQKHDDDTYSIEEAPRKGSEKPFPQLVTQVQVVEKEQPSAGSSDSNPTYTKSPREPAPNKQETKEATDVSDSLSQEETENEEERSLTEEEGTDVPTSGSEAAREDPTPKTIKPSGRIIKSPQKPLTRKDARKMVNRKLMSHGFDMKSKGISHNSLKRVNSELTEHRNKLKLQHPHFYATRNRIRKFVEKLCSAKFSERAEMLLKHKSPLKPMEVPGKGIPRSAISEKSEEDIASSQGEEQTDEQTDSSEQQTRSPSPQRLVSRDFKARLEEILVKPAATIRGASKSSLSSRPVPLPRKRVMFNTTEDGKSFNDSDDNLK.

The segment at 1–293 (MGFKGKYPQM…LKQSNEQFIQ (293 aa)) is interaction with Rab8. A coiled-coil region spans residues 98-132 (VTDLKEAHTTAQEEIATLRKSLSESNNEVVQLHKR). Residues 144-167 (YPCHLCTKNFISNEALNVHIGRKH) form a C2H2-type zinc finger. Disordered stretches follow at residues 167–187 (HRVA…DRDK), 214–267 (ERNI…KEQL), 415–548 (SEFL…RKDA), 624–682 (KSPL…VSRD), and 698–737 (IRGA…DNLK). Basic and acidic residues-rich tracts occupy residues 244–266 (EPKE…RKEQ) and 415–438 (SEFL…KGSE). Polar residues predominate over residues 457–469 (SAGSSDSNPTYTK). Residues 492 to 510 (SQEETENEEERSLTEEEGT) show a composition bias toward acidic residues. The span at 665 to 677 (SSEQQTRSPSPQR) shows a compositional bias: polar residues. Positions 724-737 (EDGKSFNDSDDNLK) are enriched in basic and acidic residues.

This sequence belongs to the DZIP C2H2-type zinc-finger protein family. Component of a ciliary transition zone (TZ)-localized complex composed of DZIP1, Fam92 and Cby. Interacts directly with Cby. Interacts with Cep290 (via N-terminus). Interacts (via N-terminus) with Rab8. In neurons of the second and third antennal segments, expressed at the tip of the dendrites.

It localises to the cytoplasm. Its subcellular location is the cytoskeleton. The protein localises to the microtubule organizing center. It is found in the centrosome. The protein resides in the centriole. It localises to the cilium basal body. Component of the DZIP1-Fam92-Cby complex which promotes ciliogenesis in sensory neurons and spermatocytes by acting downstream of Cep290 to initiate early ciliary membrane formation and thus transition zone (TZ) assembly. During spermatogenesis, also regulates distal elongation of the basal-body and their docking (anchoring) to the plasma membrane and as a consequence, regulates the initiation and proper elongation of axonemal microtubules. Within the complex, required to recruit or stabilize Rab8, Fam92 and Cby at the distal basal body of cilia to promote early ciliary membrane formation and initiate TZ assembly. Also acts with Fam92 to restrict Cep290 localization to the proximal part of the TZ. May also be involved in recruitment or stabilization of Mks1 at the TZ. The polypeptide is Cilium assembly protein DZIP1L (Drosophila melanogaster (Fruit fly)).